Here is a 318-residue protein sequence, read N- to C-terminus: Aspartate carbamoyltransferase catalytic subunit (318 aa).

The carbamoyl phosphate site is built by Arg54 and Thr55. Lys82 is an L-aspartate binding site. Carbamoyl phosphate contacts are provided by Arg104, His134, and Gln137. Residues Arg174 and Arg230 each coordinate L-aspartate. The carbamoyl phosphate site is built by Gly271 and Pro272.

The protein belongs to the aspartate/ornithine carbamoyltransferase superfamily. ATCase family. In terms of assembly, heterododecamer (2C3:3R2) of six catalytic PyrB chains organized as two trimers (C3), and six regulatory PyrI chains organized as three dimers (R2).

The enzyme catalyses carbamoyl phosphate + L-aspartate = N-carbamoyl-L-aspartate + phosphate + H(+). Its pathway is pyrimidine metabolism; UMP biosynthesis via de novo pathway; (S)-dihydroorotate from bicarbonate: step 2/3. Functionally, catalyzes the condensation of carbamoyl phosphate and aspartate to form carbamoyl aspartate and inorganic phosphate, the committed step in the de novo pyrimidine nucleotide biosynthesis pathway. The polypeptide is Aspartate carbamoyltransferase catalytic subunit (Clavibacter michiganensis subsp. michiganensis (strain NCPPB 382)).